The chain runs to 324 residues: FCS-Like Zinc finger 11 (324 aa).

The FLZ-type zinc-finger motif lies at N266–L309.

It belongs to the FLZ family. Interacts with KIN10 and KIN11 via its FLZ-type zinc finger domain. Forms heterodimer with FLZ2 in vitro.

It localises to the cytoplasm. Its subcellular location is the nucleus. Functionally, may act as an adapter to facilitate the interaction of SnRK1 complex with effector proteins, conferring tissue- and stimulus-type specific differences in the SnRK1 regulation pathway. The sequence is that of FCS-Like Zinc finger 11 from Arabidopsis thaliana (Mouse-ear cress).